The sequence spans 303 residues: Porphobilinogen deaminase (303 aa).

Cys-240 carries the S-(dipyrrolylmethanemethyl)cysteine modification.

Belongs to the HMBS family. Monomer. Dipyrromethane is required as a cofactor.

It catalyses the reaction 4 porphobilinogen + H2O = hydroxymethylbilane + 4 NH4(+). Its pathway is porphyrin-containing compound metabolism; protoporphyrin-IX biosynthesis; coproporphyrinogen-III from 5-aminolevulinate: step 2/4. Functionally, tetrapolymerization of the monopyrrole PBG into the hydroxymethylbilane pre-uroporphyrinogen in several discrete steps. The chain is Porphobilinogen deaminase from Stenotrophomonas maltophilia (strain R551-3).